The following is a 90-amino-acid chain: Small ribosomal subunit protein bS20 (90 aa).

A compositionally biased stretch (polar residues) spans 1 to 10; sequence MANHKSTQKS. Positions 1-25 are disordered; the sequence is MANHKSTQKSIRQDQKRNLINKSRK.

The protein belongs to the bacterial ribosomal protein bS20 family.

In terms of biological role, binds directly to 16S ribosomal RNA. This Orientia tsutsugamushi (strain Ikeda) (Rickettsia tsutsugamushi) protein is Small ribosomal subunit protein bS20.